Reading from the N-terminus, the 171-residue chain is Probable chorismate pyruvate-lyase (171 aa).

Residues M36, R78, L116, and E157 each coordinate substrate.

The protein belongs to the UbiC family.

Its subcellular location is the cytoplasm. The enzyme catalyses chorismate = 4-hydroxybenzoate + pyruvate. The protein operates within cofactor biosynthesis; ubiquinone biosynthesis. Its function is as follows. Removes the pyruvyl group from chorismate, with concomitant aromatization of the ring, to provide 4-hydroxybenzoate (4HB) for the ubiquinone pathway. This is Probable chorismate pyruvate-lyase from Bartonella henselae (strain ATCC 49882 / DSM 28221 / CCUG 30454 / Houston 1) (Rochalimaea henselae).